The sequence spans 207 residues: Claudin-11 (207 aa).

Residue Met1 is a topological domain, cytoplasmic. Residues 2–22 (VATCLQVVGFVTSFVGWIGII) traverse the membrane as a helical segment. Over 23–82 (VTTSTNDWVVTCSYTIPTCRKMDELGSKGLWADCVMATGLYHCKPLVDILILPGYVQACR) the chain is Extracellular. A helical transmembrane segment spans residues 83 to 103 (ALMIAASVLGLPAILLLLTVL). Topologically, residues 104–122 (PCIRMGHEPGVAKYRRAQL) are cytoplasmic. A helical transmembrane segment spans residues 123 to 143 (AGVLLILLALCAIVATIWFPV). The Extracellular portion of the chain corresponds to 144–157 (CAHREITIVSFGYS). Residues 158–178 (LYAGWIGAVMCLVGGCVIVCC) form a helical membrane-spanning segment. Topologically, residues 179 to 207 (SGDAQSFGENRFYYSSGSSSPTHAKSAHV) are cytoplasmic. A phosphoserine mark is found at Ser193, Ser194, Ser197, and Ser198.

It belongs to the claudin family. Interacts with tetraspanin-3/TSPAN3. Interacts with OCLN.

The protein localises to the cell junction. Its subcellular location is the tight junction. It is found in the cell membrane. Plays a major role in tight junction-specific obliteration of the intercellular space, through calcium-independent cell-adhesion activity. The sequence is that of Claudin-11 (Cldn11) from Mus musculus (Mouse).